Reading from the N-terminus, the 626-residue chain is Protein ALEX (626 aa).

4 disordered regions span residues M1–M29, T173–P223, A236–S473, and A556–R612. 2 stretches are compositionally biased toward polar residues: residues K186–Q195 and G255–L270. Positions Q281–P312 are enriched in basic and acidic residues. Residues Q337 to Q346 are compositionally biased toward low complexity. Pro residues predominate over residues I366 to P399. Low complexity predominate over residues R416–P435. Pro residues predominate over residues L436 to Q445. Residues A570–W579 show a composition bias toward basic residues. Over residues R600 to S611 the composition is skewed to polar residues.

This sequence belongs to the ALEX family. Interacts with the N-terminal region of the XLas isoforms of guanine nucleotide-binding protein G(s) subunit alpha.

The protein resides in the cell membrane. Its subcellular location is the cell projection. It localises to the ruffle. Its function is as follows. May inhibit the adenylyl cyclase-stimulating activity of guanine nucleotide-binding protein G(s) subunit alpha which is produced from the same locus in a different open reading frame. In Homo sapiens (Human), this protein is Protein ALEX.